Reading from the N-terminus, the 196-residue chain is Hypoxanthine/guanine phosphoribosyltransferase (196 aa).

Belongs to the purine/pyrimidine phosphoribosyltransferase family. Archaeal HPRT subfamily. In terms of assembly, homodimer.

It is found in the cytoplasm. It carries out the reaction IMP + diphosphate = hypoxanthine + 5-phospho-alpha-D-ribose 1-diphosphate. The enzyme catalyses GMP + diphosphate = guanine + 5-phospho-alpha-D-ribose 1-diphosphate. It functions in the pathway purine metabolism; IMP biosynthesis via salvage pathway; IMP from hypoxanthine: step 1/1. Its function is as follows. Catalyzes a salvage reaction resulting in the formation of IMP that is energically less costly than de novo synthesis. The polypeptide is Hypoxanthine/guanine phosphoribosyltransferase (Methanocaldococcus sp. (strain FS406-22)).